The primary structure comprises 318 residues: Ribosomal RNA small subunit methyltransferase H (318 aa).

Residues 38-40 (AGH), D57, L91, D105, and Q112 contribute to the S-adenosyl-L-methionine site.

This sequence belongs to the methyltransferase superfamily. RsmH family.

It localises to the cytoplasm. The enzyme catalyses cytidine(1402) in 16S rRNA + S-adenosyl-L-methionine = N(4)-methylcytidine(1402) in 16S rRNA + S-adenosyl-L-homocysteine + H(+). In terms of biological role, specifically methylates the N4 position of cytidine in position 1402 (C1402) of 16S rRNA. The chain is Ribosomal RNA small subunit methyltransferase H from Clavibacter sepedonicus (Clavibacter michiganensis subsp. sepedonicus).